A 525-amino-acid chain; its full sequence is GMP synthase [glutamine-hydrolyzing] (525 aa).

The region spanning K3–S200 is the Glutamine amidotransferase type-1 domain. C79 functions as the Nucleophile in the catalytic mechanism. Catalysis depends on residues H174 and E176. In terms of domain architecture, GMPS ATP-PPase spans W201 to R393. S228–S234 is a binding site for ATP.

As to quaternary structure, homodimer.

It catalyses the reaction XMP + L-glutamine + ATP + H2O = GMP + L-glutamate + AMP + diphosphate + 2 H(+). The protein operates within purine metabolism; GMP biosynthesis; GMP from XMP (L-Gln route): step 1/1. Functionally, catalyzes the synthesis of GMP from XMP. The sequence is that of GMP synthase [glutamine-hydrolyzing] from Chromobacterium violaceum (strain ATCC 12472 / DSM 30191 / JCM 1249 / CCUG 213 / NBRC 12614 / NCIMB 9131 / NCTC 9757 / MK).